Consider the following 276-residue polypeptide: Undecaprenyl-diphosphatase (276 aa).

7 helical membrane passes run 46-66 (AGASFAAVIQLGSLGAVLIYF), 94-114 (LMGILVGTLPIVIAGWAVKAI), 122-142 (LWVVAAAAIGLALALGWAERV), 152-172 (LGIGDGLWVGLAQALALIPGV), 196-216 (SFLLGIPALFLAGVAEFIAEF), 226-246 (LGTLSAFVFSYGSIDWLIRFL), and 253-273 (VFIVYRIGFGLFIFLGLALGF).

Belongs to the UppP family.

The protein localises to the cell inner membrane. The catalysed reaction is di-trans,octa-cis-undecaprenyl diphosphate + H2O = di-trans,octa-cis-undecaprenyl phosphate + phosphate + H(+). Its function is as follows. Catalyzes the dephosphorylation of undecaprenyl diphosphate (UPP). Confers resistance to bacitracin. The sequence is that of Undecaprenyl-diphosphatase from Synechococcus sp. (strain JA-3-3Ab) (Cyanobacteria bacterium Yellowstone A-Prime).